We begin with the raw amino-acid sequence, 882 residues long: Alanine--tRNA ligase (882 aa).

Residues His564, His568, Cys666, and His670 each coordinate Zn(2+).

The protein belongs to the class-II aminoacyl-tRNA synthetase family. It depends on Zn(2+) as a cofactor.

Its subcellular location is the cytoplasm. It catalyses the reaction tRNA(Ala) + L-alanine + ATP = L-alanyl-tRNA(Ala) + AMP + diphosphate. In terms of biological role, catalyzes the attachment of alanine to tRNA(Ala) in a two-step reaction: alanine is first activated by ATP to form Ala-AMP and then transferred to the acceptor end of tRNA(Ala). Also edits incorrectly charged Ser-tRNA(Ala) and Gly-tRNA(Ala) via its editing domain. In Rubrobacter xylanophilus (strain DSM 9941 / JCM 11954 / NBRC 16129 / PRD-1), this protein is Alanine--tRNA ligase.